We begin with the raw amino-acid sequence, 209 residues long: Holliday junction branch migration complex subunit RuvA (209 aa).

The segment at 1–70 (MFSYLKGEAI…EDGTYLYGFA (70 aa)) is domain I. Positions 71 to 149 (SAAARDLFRQ…QWRDQFSLPD (79 aa)) are domain II. The flexible linker stretch occupies residues 149–153 (DTAAQ). Positions 154–209 (PNAAVHEDLELTLLALGYQETEIRGAIATLSQDSILLQNDNADEWIRRAITLLSQT) are domain III.

This sequence belongs to the RuvA family. In terms of assembly, homotetramer. Forms an RuvA(8)-RuvB(12)-Holliday junction (HJ) complex. HJ DNA is sandwiched between 2 RuvA tetramers; dsDNA enters through RuvA and exits via RuvB. An RuvB hexamer assembles on each DNA strand where it exits the tetramer. Each RuvB hexamer is contacted by two RuvA subunits (via domain III) on 2 adjacent RuvB subunits; this complex drives branch migration. In the full resolvosome a probable DNA-RuvA(4)-RuvB(12)-RuvC(2) complex forms which resolves the HJ.

The protein resides in the cytoplasm. Functionally, the RuvA-RuvB-RuvC complex processes Holliday junction (HJ) DNA during genetic recombination and DNA repair, while the RuvA-RuvB complex plays an important role in the rescue of blocked DNA replication forks via replication fork reversal (RFR). RuvA specifically binds to HJ cruciform DNA, conferring on it an open structure. The RuvB hexamer acts as an ATP-dependent pump, pulling dsDNA into and through the RuvAB complex. HJ branch migration allows RuvC to scan DNA until it finds its consensus sequence, where it cleaves and resolves the cruciform DNA. In Picosynechococcus sp. (strain ATCC 27264 / PCC 7002 / PR-6) (Agmenellum quadruplicatum), this protein is Holliday junction branch migration complex subunit RuvA.